The chain runs to 270 residues: Phosphonates import ATP-binding protein PhnC (270 aa).

Residues 2-245 (LVIEGLTCRF…IARELYDLEA (244 aa)) enclose the ABC transporter domain. ATP is bound at residue 34 to 41 (GRSGAGKS).

Belongs to the ABC transporter superfamily. Phosphonates importer (TC 3.A.1.9.1) family. As to quaternary structure, the complex is composed of two ATP-binding proteins (PhnC), two transmembrane proteins (PhnE) and a solute-binding protein (PhnD).

It localises to the cell inner membrane. It catalyses the reaction phosphonate(out) + ATP + H2O = phosphonate(in) + ADP + phosphate + H(+). In terms of biological role, part of the ABC transporter complex PhnCDE involved in phosphonates import. Responsible for energy coupling to the transport system. This Rhodopseudomonas palustris (strain BisB5) protein is Phosphonates import ATP-binding protein PhnC.